The sequence spans 670 residues: DNA ligase (670 aa).

NAD(+)-binding positions include 32 to 36 (DSEYD), 81 to 82 (SL), and Glu114. Lys116 acts as the N6-AMP-lysine intermediate in catalysis. The NAD(+) site is built by Arg137, Glu174, Lys291, and Lys315. Residues Cys409, Cys412, Cys427, and Cys433 each contribute to the Zn(2+) site. The BRCT domain occupies 592–670 (ASENLFKDKT…EEEFLAQITR (79 aa)).

This sequence belongs to the NAD-dependent DNA ligase family. LigA subfamily. The cofactor is Mg(2+). Mn(2+) is required as a cofactor.

It carries out the reaction NAD(+) + (deoxyribonucleotide)n-3'-hydroxyl + 5'-phospho-(deoxyribonucleotide)m = (deoxyribonucleotide)n+m + AMP + beta-nicotinamide D-nucleotide.. Its function is as follows. DNA ligase that catalyzes the formation of phosphodiester linkages between 5'-phosphoryl and 3'-hydroxyl groups in double-stranded DNA using NAD as a coenzyme and as the energy source for the reaction. It is essential for DNA replication and repair of damaged DNA. This Haemophilus influenzae (strain PittEE) protein is DNA ligase.